A 122-amino-acid polypeptide reads, in one-letter code: Large ribosomal subunit protein uL14 (122 aa).

The protein belongs to the universal ribosomal protein uL14 family. Part of the 50S ribosomal subunit. Forms a cluster with proteins L3 and L19. In the 70S ribosome, L14 and L19 interact and together make contacts with the 16S rRNA in bridges B5 and B8.

Functionally, binds to 23S rRNA. Forms part of two intersubunit bridges in the 70S ribosome. The chain is Large ribosomal subunit protein uL14 from Clostridium botulinum (strain 657 / Type Ba4).